Here is a 540-residue protein sequence, read N- to C-terminus: Calnexin homolog (540 aa).

The first 29 residues, 1–29 (MELSRRKMCCYIQFCCFVLIGCFISQICA), serve as a signal peptide directing secretion. The Lumenal portion of the chain corresponds to 30–469 (SSDAIFYESF…EKAETQPNIT (440 aa)). Ca(2+)-binding residues include Ser38 and Asp69. A disulfide bridge links Cys112 with Cys147. 4 residues coordinate an alpha-D-glucoside: Tyr116, Lys118, Tyr138, and Asp145. The interval 221-301 (LIPTKTIPDP…DWDDEEDGEW (81 aa)) is disordered. A p domain (Extended arm) region spans residues 227-360 (IPDPDDKKPE…REIPNPDYFE (134 aa)). The span at 228–253 (PDPDDKKPEDWDERAKIPDPEATKPD) shows a compositional bias: basic and acidic residues. 5 repeat units span residues 229-240 (DPDDKKPEDWDE), 246-257 (DPEATKPDDWDE), 265-276 (DEEAEKPEGWLD), 284-295 (DPEAVKPEDWDD), and 299-309 (GEWEAPQIENP). 2 4 X approximate repeats regions span residues 229–295 (DPDD…DWDD) and 299–356 (GEWE…IPNP). Composition is skewed to acidic residues over residues 254-285 (DWDEDAPMEILDEEAEKPEGWLDDEPEEIDDP) and 292-301 (DWDDEEDGEW). A disulfide bridge links Cys311 with Cys317. 3 consecutive repeat copies span residues 318–328 (GEWRRPLKRNP), 332–342 (GKWHAPLIDNP), and 346–356 (GIWKPREIPNP). Glu375 contacts an alpha-D-glucoside. A Ca(2+)-binding site is contributed by Asp386. The N-linked (GlcNAc...) asparagine glycan is linked to Asn467. Residues 470–490 (IGVIVSIIVVIFSILLKLLFG) form a helical membrane-spanning segment. Over 491–540 (GKKAAPKVNVVPKKKEEPEASNTAEVREGEEEKTEGEVAAAPRRRPRRDT) the chain is Cytoplasmic. A disordered region spans residues 499–540 (NVVPKKKEEPEASNTAEVREGEEEKTEGEVAAAPRRRPRRDT).

The protein belongs to the calreticulin family.

Its subcellular location is the endoplasmic reticulum membrane. Its function is as follows. Calcium-binding protein that interacts with newly synthesized monoglucosylated glycoproteins in the endoplasmic reticulum. It may act in assisting protein assembly and/or in the retention within the ER of unassembled protein subunits. It seems to play a major role in the quality control apparatus of the ER by the retention of incorrectly folded proteins. The protein is Calnexin homolog of Helianthus tuberosus (Jerusalem artichoke).